A 669-amino-acid polypeptide reads, in one-letter code: Probable pectinesterase/pectinesterase inhibitor 21 (669 aa).

A helical transmembrane segment spans residues 16–36; the sequence is IVITISSVLLISMVVAVTVGV. N-linked (GlcNAc...) asparagine glycosylation is found at Asn52, Asn81, Asn94, Asn281, and Asn300. The segment at 52 to 205 is pectinesterase inhibitor 21; it reads NASVKAVKDV…IELTHNGLAI (154 aa). The tract at residues 255–551 is pectinesterase 21; the sequence is DIVVAQDGSG…FTPAQYIQGD (297 aa). The substrate site is built by Thr330 and Gln360. Asp383 functions as the Proton donor; for pectinesterase activity in the catalytic mechanism. Cys397 and Cys417 form a disulfide bridge. Asp404 functions as the Nucleophile; for pectinesterase activity in the catalytic mechanism. Residue Asn416 is glycosylated (N-linked (GlcNAc...) asparagine). Substrate contacts are provided by Arg472 and Trp474. Positions 615-669 are disordered; the sequence is AYTGTASPESSIKVSSSTETASPESSFTEASTASPESSIMVASTESSGSFFSMFT. Positions 616 to 628 are enriched in polar residues; that stretch reads YTGTASPESSIKV. Positions 629–652 are enriched in low complexity; the sequence is SSSTETASPESSFTEASTASPESS. A compositionally biased stretch (polar residues) spans 654-669; it reads MVASTESSGSFFSMFT.

The protein in the N-terminal section; belongs to the PMEI family. In the C-terminal section; belongs to the pectinesterase family. In terms of tissue distribution, expressed in flower buds.

The protein resides in the membrane. The enzyme catalyses [(1-&gt;4)-alpha-D-galacturonosyl methyl ester](n) + n H2O = [(1-&gt;4)-alpha-D-galacturonosyl](n) + n methanol + n H(+). The protein operates within glycan metabolism; pectin degradation; 2-dehydro-3-deoxy-D-gluconate from pectin: step 1/5. Functionally, acts in the modification of cell walls via demethylesterification of cell wall pectin. This is Probable pectinesterase/pectinesterase inhibitor 21 (PME21) from Arabidopsis thaliana (Mouse-ear cress).